The chain runs to 185 residues: Protein GrpE (185 aa).

Residues 1–11 are compositionally biased toward polar residues; that stretch reads MENTQENPTDQ. Residues 1–38 are disordered; it reads MENTQENPTDQTTEETGREAQAAEPAAQAAENAAPAAE. A compositionally biased stretch (low complexity) spans 19 to 38; the sequence is EAQAAEPAAQAAENAAPAAE.

Belongs to the GrpE family. As to quaternary structure, homodimer.

It localises to the cytoplasm. Its function is as follows. Participates actively in the response to hyperosmotic and heat shock by preventing the aggregation of stress-denatured proteins, in association with DnaK and GrpE. It is the nucleotide exchange factor for DnaK and may function as a thermosensor. Unfolded proteins bind initially to DnaJ; upon interaction with the DnaJ-bound protein, DnaK hydrolyzes its bound ATP, resulting in the formation of a stable complex. GrpE releases ADP from DnaK; ATP binding to DnaK triggers the release of the substrate protein, thus completing the reaction cycle. Several rounds of ATP-dependent interactions between DnaJ, DnaK and GrpE are required for fully efficient folding. This Burkholderia mallei (strain NCTC 10247) protein is Protein GrpE.